Reading from the N-terminus, the 524-residue chain is Peptide chain release factor 3 (524 aa).

Residues 9–275 form the tr-type G domain; it reads QRRRTFAIIS…AVVELSPPPL (267 aa). GTP-binding positions include 18-25, 86-90, and 140-143; these read SHPDAGKT, DTPGH, and NKLD.

Belongs to the TRAFAC class translation factor GTPase superfamily. Classic translation factor GTPase family. PrfC subfamily.

The protein resides in the cytoplasm. Increases the formation of ribosomal termination complexes and stimulates activities of RF-1 and RF-2. It binds guanine nucleotides and has strong preference for UGA stop codons. It may interact directly with the ribosome. The stimulation of RF-1 and RF-2 is significantly reduced by GTP and GDP, but not by GMP. The chain is Peptide chain release factor 3 from Methylobacillus flagellatus (strain ATCC 51484 / DSM 6875 / VKM B-1610 / KT).